Reading from the N-terminus, the 145-residue chain is Peptidyl-lysine N-acetyltransferase YjaB (145 aa).

Positions 3–144 (INIRRSRHEE…KPYPLLNLIY (142 aa)) constitute an N-acetyltransferase domain.

Belongs to the acetyltransferase family.

The enzyme catalyses L-lysyl-[protein] + acetyl-CoA = N(6)-acetyl-L-lysyl-[protein] + CoA + H(+). N-epsilon-lysine acetyltransferase that catalyzes acetylation of a large number of proteins. This is Peptidyl-lysine N-acetyltransferase YjaB (yjaB) from Salmonella typhimurium (strain LT2 / SGSC1412 / ATCC 700720).